Reading from the N-terminus, the 254-residue chain is Alcohol dehydrogenase (254 aa).

10-33 (FVAGLGGIGLDTSREIVKSGPKNL) lines the NAD(+) pocket. Ser-138 provides a ligand contact to substrate. Tyr-151 acts as the Proton acceptor in catalysis.

This sequence belongs to the short-chain dehydrogenases/reductases (SDR) family. Homodimer.

The enzyme catalyses a primary alcohol + NAD(+) = an aldehyde + NADH + H(+). The catalysed reaction is a secondary alcohol + NAD(+) = a ketone + NADH + H(+). The protein is Alcohol dehydrogenase (Adh) of Drosophila picticornis (Fruit fly).